A 228-amino-acid chain; its full sequence is Prolactin (228 aa).

An N-terminal signal peptide occupies residues 1–29 (MCTKRSSLKGSLLLLLLISSLLLSRSVDS). The cysteines at positions 33 and 40 are disulfide-linked. Phosphoserine occurs at positions 55, 63, and 119. Disulfide bonds link Cys-87–Cys-203 and Cys-220–Cys-228.

The protein belongs to the somatotropin/prolactin family. In terms of assembly, interacts with PRLR.

Its subcellular location is the secreted. Prolactin acts primarily on the mammary gland by promoting lactation. This chain is Prolactin (PRL), found in Isoodon macrourus (Short-nosed bandicoot).